The sequence spans 111 residues: Cornifelin (111 aa).

Belongs to the cornifelin family. As to quaternary structure, directly or indirectly cross-linked to CE proteins loricin and involucrin (IVL).

It localises to the cytoplasm. In terms of biological role, part of the insoluble cornified cell envelope (CE) of stratified squamous epithelia. The chain is Cornifelin (Cnfn) from Mus musculus (Mouse).